The following is a 426-amino-acid chain: Enolase (426 aa).

Residue Q163 coordinates (2R)-2-phosphoglycerate. The active-site Proton donor is E205. The Mg(2+) site is built by D242, E283, and D310. Positions 335, 364, 365, and 386 each coordinate (2R)-2-phosphoglycerate. K335 functions as the Proton acceptor in the catalytic mechanism.

Belongs to the enolase family. The cofactor is Mg(2+).

The protein localises to the cytoplasm. It localises to the secreted. It is found in the cell surface. The enzyme catalyses (2R)-2-phosphoglycerate = phosphoenolpyruvate + H2O. It functions in the pathway carbohydrate degradation; glycolysis; pyruvate from D-glyceraldehyde 3-phosphate: step 4/5. In terms of biological role, catalyzes the reversible conversion of 2-phosphoglycerate (2-PG) into phosphoenolpyruvate (PEP). It is essential for the degradation of carbohydrates via glycolysis. This is Enolase from Arthrobacter sp. (strain FB24).